Reading from the N-terminus, the 315-residue chain is Methionyl-tRNA formyltransferase (315 aa).

Ser-113–Pro-116 contacts (6S)-5,6,7,8-tetrahydrofolate.

This sequence belongs to the Fmt family.

The enzyme catalyses L-methionyl-tRNA(fMet) + (6R)-10-formyltetrahydrofolate = N-formyl-L-methionyl-tRNA(fMet) + (6S)-5,6,7,8-tetrahydrofolate + H(+). Attaches a formyl group to the free amino group of methionyl-tRNA(fMet). The formyl group appears to play a dual role in the initiator identity of N-formylmethionyl-tRNA by promoting its recognition by IF2 and preventing the misappropriation of this tRNA by the elongation apparatus. The sequence is that of Methionyl-tRNA formyltransferase from Vibrio vulnificus (strain CMCP6).